The primary structure comprises 577 residues: Secreted LysM effector Lys4 (577 aa).

An N-terminal signal peptide occupies residues 1–19 (MRALTAAVLFVAGLTPVLA). The LysM 1 domain maps to 38-85 (AWYTIVKGDGCDTVEKKFKITPEQFFKWNPDVSTDCVKNFWVGNSYCV). Low complexity predominate over residues 96–121 (TSTTVKSSSTTQKTSSTSSKLSSSSK). The disordered stretch occupies residues 96–135 (TSTTVKSSSTTQKTSSTSSKLSSSSKPVNTTTTPYSTRNP). Positions 122–135 (PVNTTTTPYSTRNP) are enriched in polar residues. N124, N140, N216, and N235 each carry an N-linked (GlcNAc...) asparagine glycan. LysM domains are found at residues 251–298 (NFYQ…YYCV), 328–375 (KWYQ…WYCV), and 408–455 (QYWL…YVCV). Over residues 464–485 (SGSTTTITGPPTKGSNPPTTTT) the composition is skewed to low complexity. A disordered region spans residues 464–490 (SGSTTTITGPPTKGSNPPTTTTSGGGG). The LysM 5 domain maps to 510–558 (FWFRGKDGASLFCADIAKDAGVSLPDFLKWNPGVGSNCESLWADTWYCV).

Belongs to the secreted LysM effector family.

Its function is as follows. Might have a role in sequestration of chitin oligosaccharides (breakdown products of fungal cell walls that are released during invasion and act as triggers of host immunity) to dampen host defense. This Pochonia chlamydosporia (strain 123) (Metacordyceps chlamydosporia) protein is Secreted LysM effector Lys4.